A 177-amino-acid polypeptide reads, in one-letter code: Bifunctional protein PyrR (177 aa).

The PRPP-binding signature appears at 99-111 (VVLVDDVLFTGRT).

It belongs to the purine/pyrimidine phosphoribosyltransferase family. PyrR subfamily.

It catalyses the reaction UMP + diphosphate = 5-phospho-alpha-D-ribose 1-diphosphate + uracil. In terms of biological role, regulates the transcription of the pyrimidine nucleotide (pyr) operon in response to exogenous pyrimidines. Functionally, also displays a weak uracil phosphoribosyltransferase activity which is not physiologically significant. This chain is Bifunctional protein PyrR, found in Geobacter sulfurreducens (strain ATCC 51573 / DSM 12127 / PCA).